Consider the following 127-residue polypeptide: uncharacterized protein (127 aa).

The helical transmembrane segment at 85–107 (VYLGKIGFVLLHVFYLSCIAYYD) threads the bilayer.

The protein localises to the mitochondrion membrane. This is an uncharacterized protein from Dictyostelium discoideum (Social amoeba).